Reading from the N-terminus, the 147-residue chain is Leghemoglobin 3 (147 aa).

A Globin domain is found at 2 to 147 (GFTAQQEALV…LATAIKKAMG (146 aa)). Nitrated tyrosine is present on Tyr30. Ser45 is a binding site for heme b. Phosphoserine is present on Ser45. His61 contacts O2. Positions 64, 93, and 96 each coordinate heme b. Tyr135 is subject to Nitrated tyrosine.

The protein belongs to the plant globin family. In terms of assembly, monomer. Nitrated in effective nodules and particularly in hypoxic conditions; this mechanism may play a protective role in the symbiosis by buffering toxic peroxynitrite NO(2)(-). Nitration level decrease during nodule senescence. Post-translationally, phosphorylation at Ser-45 disrupts the molecular environment of its porphyrin ring oxygen binding pocket, thus leading to a reduced oxygen consumption and to the delivery of oxygen O(2) to symbiosomes. As to expression, specifically and strongly expressed in root nodules and at low levels in seedlings.

It is found in the cytoplasm. The protein localises to the cytosol. It localises to the nucleus. Its function is as follows. Leghemoglobin that reversibly binds oxygen O(2) through a pentacoordinated heme iron. In root nodules, facilitates the diffusion of oxygen to the bacteroids while preventing the bacterial nitrogenase from being inactivated by buffering dioxygen, nitric oxide and carbon monoxide, and promoting the formation of reactive oxygen species (ROS, e.g. H(2)O(2)). This role is essential for symbiotic nitrogen fixation (SNF). The polypeptide is Leghemoglobin 3 (Lotus japonicus (Lotus corniculatus var. japonicus)).